The chain runs to 130 residues: Large ribosomal subunit protein bL12 (130 aa).

The protein belongs to the bacterial ribosomal protein bL12 family. In terms of assembly, homodimer. Part of the ribosomal stalk of the 50S ribosomal subunit. Forms a multimeric L10(L12)X complex, where L10 forms an elongated spine to which 2 to 4 L12 dimers bind in a sequential fashion. Binds GTP-bound translation factors.

Functionally, forms part of the ribosomal stalk which helps the ribosome interact with GTP-bound translation factors. Is thus essential for accurate translation. The protein is Large ribosomal subunit protein bL12 of Yersinia pestis bv. Antiqua (strain Angola).